We begin with the raw amino-acid sequence, 208 residues long: Small ribosomal subunit protein uS4 (208 aa).

Residues 98-161 (RRLDNVIYRL…KESPRIKELL (64 aa)) enclose the S4 RNA-binding domain.

This sequence belongs to the universal ribosomal protein uS4 family. As to quaternary structure, part of the 30S ribosomal subunit. Contacts protein S5. The interaction surface between S4 and S5 is involved in control of translational fidelity.

Functionally, one of the primary rRNA binding proteins, it binds directly to 16S rRNA where it nucleates assembly of the body of the 30S subunit. In terms of biological role, with S5 and S12 plays an important role in translational accuracy. The chain is Small ribosomal subunit protein uS4 from Pelotomaculum thermopropionicum (strain DSM 13744 / JCM 10971 / SI).